A 245-amino-acid chain; its full sequence is 1-(5-phosphoribosyl)-5-[(5-phosphoribosylamino)methylideneamino] imidazole-4-carboxamide isomerase (245 aa).

Residue D7 is the Proton acceptor of the active site. D129 (proton donor) is an active-site residue.

Belongs to the HisA/HisF family.

Its subcellular location is the cytoplasm. The catalysed reaction is 1-(5-phospho-beta-D-ribosyl)-5-[(5-phospho-beta-D-ribosylamino)methylideneamino]imidazole-4-carboxamide = 5-[(5-phospho-1-deoxy-D-ribulos-1-ylimino)methylamino]-1-(5-phospho-beta-D-ribosyl)imidazole-4-carboxamide. It participates in amino-acid biosynthesis; L-histidine biosynthesis; L-histidine from 5-phospho-alpha-D-ribose 1-diphosphate: step 4/9. This chain is 1-(5-phosphoribosyl)-5-[(5-phosphoribosylamino)methylideneamino] imidazole-4-carboxamide isomerase, found in Vibrio campbellii (strain ATCC BAA-1116).